A 336-amino-acid chain; its full sequence is Ferrochelatase (336 aa).

Fe cation is bound by residues histidine 206 and glutamate 287.

It belongs to the ferrochelatase family.

It is found in the cytoplasm. It catalyses the reaction heme b + 2 H(+) = protoporphyrin IX + Fe(2+). The protein operates within porphyrin-containing compound metabolism; protoheme biosynthesis; protoheme from protoporphyrin-IX: step 1/1. Catalyzes the ferrous insertion into protoporphyrin IX. The polypeptide is Ferrochelatase (Neisseria meningitidis serogroup C / serotype 2a (strain ATCC 700532 / DSM 15464 / FAM18)).